The chain runs to 509 residues: GMP synthase [glutamine-hydrolyzing] (509 aa).

The Glutamine amidotransferase type-1 domain occupies 4 to 194 (KVIVLDFGGQ…LYEICGLTPD (191 aa)). Catalysis depends on Cys-81, which acts as the Nucleophile. Active-site residues include His-168 and Glu-170. The GMPS ATP-PPase domain occupies 195–384 (WTMESFAQKA…LGLPESIVWR (190 aa)). An ATP-binding site is contributed by 222–228 (SGGVDSS).

In terms of assembly, homodimer.

The enzyme catalyses XMP + L-glutamine + ATP + H2O = GMP + L-glutamate + AMP + diphosphate + 2 H(+). It participates in purine metabolism; GMP biosynthesis; GMP from XMP (L-Gln route): step 1/1. Catalyzes the synthesis of GMP from XMP. This is GMP synthase [glutamine-hydrolyzing] from Carboxydothermus hydrogenoformans (strain ATCC BAA-161 / DSM 6008 / Z-2901).